The chain runs to 374 residues: Glutamate 5-kinase (374 aa).

Lys-16 lines the ATP pocket. 3 residues coordinate substrate: Ser-56, Asp-143, and Asn-155. ATP is bound by residues 175–176 (TD) and 217–223 (SGGMLTK). Residues 282–360 (RGALILDDGA…SNIGAILGYK (79 aa)) enclose the PUA domain.

The protein belongs to the glutamate 5-kinase family.

It is found in the cytoplasm. It catalyses the reaction L-glutamate + ATP = L-glutamyl 5-phosphate + ADP. It participates in amino-acid biosynthesis; L-proline biosynthesis; L-glutamate 5-semialdehyde from L-glutamate: step 1/2. Functionally, catalyzes the transfer of a phosphate group to glutamate to form L-glutamate 5-phosphate. The sequence is that of Glutamate 5-kinase from Marinomonas sp. (strain MWYL1).